A 433-amino-acid polypeptide reads, in one-letter code: MTFGRGGAASVVLNVGGARYSLSRELLKDFPLRRVSRLHGCRSERDVLEVCDDYDRERNEYFFDRHSEAFGFILLYVRGHGKLRFAPRMCELSFYNEMIYWGLEGAHLEYCCQRRLDDRMSDTHTFHAADELGREQPRPAGPEAAPSRRWLERMRRTFEEPTSSLAAQILASVSVVFVIVSMVVLCASTLPDWRAAVADNRSLDDRSRYSASPGREPSGIIEAICIGWFTAECIVRFIVSKNKCEFVKRPLNIIDLLAITPYYISVLMTVFTGENSQLQRAGVTLRVLRMMRIFWVIKLARHFIGLQTLGLTLKRCYREMAMLLVFICVAMAIFSALSQLLEHGLDLETSNKDFASIPAACWWVIISMTTVGYGDMYPITVPGRILGGVCVVSGIVLLALPITFIYHSFVQCYHELKFRSARYSRSLSAEFLN.

Residues 1–165 (MTFGRGGAAS…RTFEEPTSSL (165 aa)) lie on the Cytoplasmic side of the membrane. The chain crosses the membrane as a helical span at residues 166-187 (AAQILASVSVVFVIVSMVVLCA). Over 188 to 217 (STLPDWRAAVADNRSLDDRSRYSASPGREP) the chain is Extracellular. A helical membrane pass occupies residues 218-239 (SGIIEAICIGWFTAECIVRFIV). Residues 240-250 (SKNKCEFVKRP) are Cytoplasmic-facing. The chain crosses the membrane as a helical span at residues 251–271 (LNIIDLLAITPYYISVLMTVF). The Extracellular portion of the chain corresponds to 272–281 (TGENSQLQRA). A helical; Voltage-sensor transmembrane segment spans residues 282-302 (GVTLRVLRMMRIFWVIKLARH). Topologically, residues 303 to 317 (FIGLQTLGLTLKRCY) are cytoplasmic. Residues 318-339 (REMAMLLVFICVAMAIFSALSQ) form a helical membrane-spanning segment. Over 340 to 357 (LLEHGLDLETSNKDFASI) the chain is Extracellular. Positions 358–369 (PAACWWVIISMT) form an intramembrane region, helical. The short motif at 370–375 (TVGYGD) is the Selectivity filter element. An intramembrane segment occupies 370-377 (TVGYGDMY). The Extracellular portion of the chain corresponds to 378–384 (PITVPGR). Residues 385–413 (ILGGVCVVSGIVLLALPITFIYHSFVQCY) traverse the membrane as a helical segment. At 414 to 433 (HELKFRSARYSRSLSAEFLN) the chain is on the cytoplasmic side.

This sequence belongs to the potassium channel family. G (TC 1.A.1.2) subfamily. Kv6.3/KCNG3 sub-subfamily. Heterotetramer with KCNB1. Does not form homomultimers.

The protein localises to the cell membrane. The protein resides in the cytoplasm. In terms of biological role, regulatory subunit of the voltage-gated potassium (Kv) channel which, when coassembled with KCNB1, modulates the kinetics parameters of the heterotetrameric channel namely the inactivation and deactivation rate. Potassium channel subunit that does not form functional channels by itself. Reduces the deactivation rate. Moderately acceleratee activation. The protein is Voltage-gated potassium channel regulatory subunit KCNG3 of Mus musculus (Mouse).